Here is a 208-residue protein sequence, read N- to C-terminus: Small ribosomal subunit protein uS4 (208 aa).

The segment at 30–49 is disordered; sequence EKRPYAPGEHGRDRRRTESD. The S4 RNA-binding domain occupies 95-161; sequence TRLDNLVLRA…VPFQIAAEGV (67 aa).

The protein belongs to the universal ribosomal protein uS4 family. As to quaternary structure, part of the 30S ribosomal subunit. Contacts protein S5. The interaction surface between S4 and S5 is involved in control of translational fidelity.

Functionally, one of the primary rRNA binding proteins, it binds directly to 16S rRNA where it nucleates assembly of the body of the 30S subunit. In terms of biological role, with S5 and S12 plays an important role in translational accuracy. This is Small ribosomal subunit protein uS4 from Bifidobacterium longum (strain DJO10A).